The following is a 497-amino-acid chain: FAD-linked oxidoreductase fmqD (497 aa).

The first 17 residues, 1–17, serve as a signal peptide directing secretion; sequence MQYIPFLISGLVPVALS. The 176-residue stretch at 68–243 folds into the FAD-binding PCMH-type domain; the sequence is NDPSYVATVK…TSATYRIYDQ (176 aa). Residues N99, N261, and N288 are each glycosylated (N-linked (GlcNAc...) asparagine).

It belongs to the oxygen-dependent FAD-linked oxidoreductase family.

Its subcellular location is the secreted. The protein localises to the cell wall. It participates in alkaloid biosynthesis. In terms of biological role, FAD-linked oxidoreductase; part of the gene cluster that mediates the biosynthesis of the antitumor fumiquinazolines that confer a dual-usage capability to defend against phagocytes in the environment and animal hosts. The simplest member is fumiquinazoline F (FQF) with a 6-6-6 tricyclic core derived from anthranilic acid (Ant), tryptophan (Trp), and alanine (Ala). The trimodular NRPS fmqA is responsible for FQF formation. Modules 1, 2 and 3 of fmqA are predicted to activate and load Ant, Trp and Ala, respectively, providing for the assembly of an Ant-Trp-Ala-S-enzyme intermediate that would undergo double cyclization for chain release and generation of the tricyclic 6-6-6 product fumiquinazoline F. The presence of an E domain predicted for module 2 of fmqA is consistent with epimerization of L-Trp to D-Trp during assembly to generate the R-stereocenter at C14 of FQF. The FAD-dependent monooxygenase fmqB and the monomodular NRPS fmqC then maturate FQF to FQA. FmqB oxidizes the 2',3'-double bond of the indole side chain of FQF, and fmqC activates L-Ala as the adenylate, installs it as the pantetheinyl thioester on its carrier protein domain, and acylates the oxidized indole for subsequent intramolecular cyclization to create the 6-5-5-imidazolindolone of FQA. The FAD-linked oxidoreductase fmqD introduces a third layer of scaffold complexity by converting FQA to the spirohemiaminal FQC, presumably by catalyzing the formation of a transient imine within the pyrazinone ring. FQC subsequently converts nonenzymatically to the known cyclic aminal FQD. The protein is FAD-linked oxidoreductase fmqD of Aspergillus fumigatus (strain ATCC MYA-4609 / CBS 101355 / FGSC A1100 / Af293) (Neosartorya fumigata).